The following is a 635-amino-acid chain: Interferon-induced GTP-binding protein Mx1 (635 aa).

Residues D31–P309 form the Dynamin-type G domain. Residues G41–S48 are G1 motif. GTP is bound at residue G41 to S48. A G2 motif region spans residues V66–R68. The tract at residues D147–G150 is G3 motif. GTP-binding positions include D147 to I151 and T216 to D219. Residues T216 to D219 form a G4 motif region. The segment at R248–G251 is G5 motif. One can recognise a GED domain in the interval L549–F635.

It belongs to the TRAFAC class dynamin-like GTPase superfamily. Dynamin/Fzo/YdjA family.

The protein localises to the cytoplasm. In Ictalurus punctatus (Channel catfish), this protein is Interferon-induced GTP-binding protein Mx1 (mx1).